A 436-amino-acid polypeptide reads, in one-letter code: ATP-dependent protease ATPase subunit HslU (436 aa).

Residues I18, 60–65 (GVGKTE), D250, E314, and R386 each bind ATP.

It belongs to the ClpX chaperone family. HslU subfamily. As to quaternary structure, a double ring-shaped homohexamer of HslV is capped on each side by a ring-shaped HslU homohexamer. The assembly of the HslU/HslV complex is dependent on binding of ATP.

The protein localises to the cytoplasm. In terms of biological role, ATPase subunit of a proteasome-like degradation complex; this subunit has chaperone activity. The binding of ATP and its subsequent hydrolysis by HslU are essential for unfolding of protein substrates subsequently hydrolyzed by HslV. HslU recognizes the N-terminal part of its protein substrates and unfolds these before they are guided to HslV for hydrolysis. The sequence is that of ATP-dependent protease ATPase subunit HslU from Mesorhizobium japonicum (strain LMG 29417 / CECT 9101 / MAFF 303099) (Mesorhizobium loti (strain MAFF 303099)).